Consider the following 752-residue polypeptide: Pentatricopeptide repeat-containing protein At5g13270, chloroplastic (752 aa).

A chloroplast-targeting transit peptide spans 1 to 80 (MTILTVQSSF…LQEMDKAGVS (80 aa)). PPR repeat units lie at residues 47-81 (QGQV…GVSV), 82-116 (SSYS…IENP), 117-147 (SVLL…MSEL), 148-182 (NAVS…GDKP), 183-217 (PSSM…GLCS), 218-248 (NTSI…MAVK), 249-283 (KPVA…GVEW), 284-318 (DSFV…GLES), 319-349 (EVSV…IREP), 350-384 (NDVS…NASI), 386-420 (NSFT…SLIG), 421-451 (SQYG…MDNP), 452-486 (DIVA…GMKP), 487-522 (NSVT…NVAP), and 523-553 (TIDH…MPFE). Positions 558–633 (SWKCFLSGCW…ELSCSWIQEK (76 aa)) are type E motif. Residues 634–664 (GKIHRFIVGDKHHPQTQEIYEKLKEFDGFME) are type E(+) motif. Positions 665–752 (GDMFQCNMTE…EGKCSCNDYW (88 aa)) are type DYW motif.

This sequence belongs to the PPR family. PCMP-H subfamily.

Its subcellular location is the plastid. It is found in the chloroplast. The protein is Pentatricopeptide repeat-containing protein At5g13270, chloroplastic (PCMP-H90) of Arabidopsis thaliana (Mouse-ear cress).